The chain runs to 121 residues: Ribonuclease CL2 (121 aa).

Substrate contacts are provided by Lys-6 and Arg-9. His-11 functions as the Proton acceptor in the catalytic mechanism. Cystine bridges form between Cys-26-Cys-81, Cys-42-Cys-92, and Cys-60-Cys-107. Substrate-binding positions include 43-47 (KPSNT) and Arg-82. His-114 acts as the Proton donor in catalysis.

Belongs to the pancreatic ribonuclease family.

The protein resides in the secreted. Functionally, pyrimidine-specific nuclease with preference for C. In Gallus gallus (Chicken), this protein is Ribonuclease CL2.